Reading from the N-terminus, the 687-residue chain is Ferric vulnibactin receptor VuuA (687 aa).

Positions Met-1 to Ala-37 are cleaved as a signal peptide. In terms of domain architecture, TBDR plug spans Thr-63–Asn-185. The TBDR beta-barrel domain occupies His-190–Phe-687. The short motif at Glu-670 to Phe-687 is the TonB C-terminal box element.

Belongs to the TonB-dependent receptor family.

It localises to the cell outer membrane. In terms of biological role, involved in the uptake of iron in complex with vulnibactin, a catecholate siderophore synthesized by V.vulnificus. Binds and transports ferric vulnibactin across the outer membrane. The energy source is provided by the inner membrane TonB system. The polypeptide is Ferric vulnibactin receptor VuuA (Vibrio vulnificus).